Consider the following 256-residue polypeptide: Small ribosomal subunit protein eS1 (256 aa).

At A2 the chain carries N-acetylalanine; partial.

It belongs to the eukaryotic ribosomal protein eS1 family. In terms of assembly, component of the small ribosomal subunit. Mature ribosomes consist of a small (40S) and a large (60S) subunit. The 40S subunit contains about 33 different proteins and 1 molecule of RNA (18S). The 60S subunit contains about 49 different proteins and 3 molecules of RNA (25S, 5.8S and 5S).

It localises to the cytoplasm. The sequence is that of Small ribosomal subunit protein eS1 from Meyerozyma guilliermondii (strain ATCC 6260 / CBS 566 / DSM 6381 / JCM 1539 / NBRC 10279 / NRRL Y-324) (Yeast).